We begin with the raw amino-acid sequence, 500 residues long: MPFVMAIDQGTTSSRAILFRSDISIAASAQQEFPQHFPASGWVEHEPEDIWATTIATCRAAMDKAGATAADIAAIGITNQRETVVVWDAVSGQAIHRAIVWQDRRTAEFCTRLKADGLEPMVTAKTGLIIDPYFSGTKVAWLLDNVPGARARAERGELKFGTVDCYLLWRLTGGKVHATDATNASRTLLFNIHDGAWDDELLKLLGVPRSMLPEVKDSSAHFGDSVPELFGGSITIRGIAGDQQAATIGQACFTPGMIKSTYGTGCFALLNTGATPVKSNNKLLTTVAYQLDGKRTYALEGSIFVAGSAVQWLRDGLGVIKHASETGPLADKSDSAQSVYLVPAFVGMGAPYWNPRVRGALFGLTRNTGPAELAHAALESVCYQTFDLWAAMRADWPDADAATTVLRVDGGMTASDWTMQRLADLLDAPVDRPVIQETTALGAAYLAGLSAGVFPEPQKFADNWRLDHRFRPAMSAATRERKLAGWGRAVKGLLATDEGE.

Thr-11 contributes to the ADP binding site. The ATP site is built by Thr-11, Thr-12, and Ser-13. Thr-11 provides a ligand contact to sn-glycerol 3-phosphate. ADP is bound at residue Arg-15. Sn-glycerol 3-phosphate contacts are provided by Arg-81, Glu-82, Tyr-133, and Asp-242. Residues Arg-81, Glu-82, Tyr-133, Asp-242, and Gln-243 each contribute to the glycerol site. Residues Thr-264 and Gly-307 each contribute to the ADP site. The ATP site is built by Thr-264, Gly-307, Gln-311, and Gly-411. An ADP-binding site is contributed by Gly-411.

This sequence belongs to the FGGY kinase family.

It carries out the reaction glycerol + ATP = sn-glycerol 3-phosphate + ADP + H(+). Its pathway is polyol metabolism; glycerol degradation via glycerol kinase pathway; sn-glycerol 3-phosphate from glycerol: step 1/1. Its activity is regulated as follows. Inhibited by fructose 1,6-bisphosphate (FBP). Its function is as follows. Key enzyme in the regulation of glycerol uptake and metabolism. Catalyzes the phosphorylation of glycerol to yield sn-glycerol 3-phosphate. This is Glycerol kinase from Rhodopseudomonas palustris (strain ATCC BAA-98 / CGA009).